We begin with the raw amino-acid sequence, 476 residues long: Ribosomal RNA small subunit methyltransferase F (476 aa).

Residues 125–131 (AAAPGSK), Glu149, Asp176, and Asp194 each bind S-adenosyl-L-methionine. The active-site Nucleophile is Cys247.

Belongs to the class I-like SAM-binding methyltransferase superfamily. RsmB/NOP family.

It localises to the cytoplasm. It catalyses the reaction cytidine(1407) in 16S rRNA + S-adenosyl-L-methionine = 5-methylcytidine(1407) in 16S rRNA + S-adenosyl-L-homocysteine + H(+). Specifically methylates the cytosine at position 1407 (m5C1407) of 16S rRNA. In Aeromonas salmonicida (strain A449), this protein is Ribosomal RNA small subunit methyltransferase F.